The chain runs to 215 residues: Cytochrome b6 (215 aa).

Residues 32-52 (IFYCLGGVTLICFLVQFATGF) traverse the membrane as a helical segment. Cys35 contributes to the heme c binding site. Heme b-binding residues include His86 and His100. 3 helical membrane-spanning segments follow: residues 90 to 110 (ASMM…TGGF), 116 to 136 (LTWV…VTGY), and 186 to 206 (AHTF…FLMI). Residues His187 and His202 each coordinate heme b.

Belongs to the cytochrome b family. PetB subfamily. In terms of assembly, the 4 large subunits of the cytochrome b6-f complex are cytochrome b6, subunit IV (17 kDa polypeptide, PetD), cytochrome f and the Rieske protein, while the 4 small subunits are PetG, PetL, PetM and PetN. The complex functions as a dimer. The cofactor is heme b. Heme c is required as a cofactor.

Its subcellular location is the cell inner membrane. In terms of biological role, component of the cytochrome b6-f complex, which mediates electron transfer between photosystem II (PSII) and photosystem I (PSI), cyclic electron flow around PSI, and state transitions. The polypeptide is Cytochrome b6 (Gloeobacter violaceus (strain ATCC 29082 / PCC 7421)).